Reading from the N-terminus, the 476-residue chain is Adenosylhomocysteinase (476 aa).

Residues threonine 61, aspartate 140, and glutamate 200 each contribute to the substrate site. 201-203 (TTT) lines the NAD(+) pocket. Lysine 230 and aspartate 234 together coordinate substrate. NAD(+) contacts are provided by residues asparagine 235, 264-269 (GYGDVG), glutamate 287, asparagine 322, 343-345 (IGH), and asparagine 389.

It belongs to the adenosylhomocysteinase family. NAD(+) serves as cofactor.

The protein resides in the cytoplasm. The enzyme catalyses S-adenosyl-L-homocysteine + H2O = L-homocysteine + adenosine. It functions in the pathway amino-acid biosynthesis; L-homocysteine biosynthesis; L-homocysteine from S-adenosyl-L-homocysteine: step 1/1. Functionally, may play a key role in the regulation of the intracellular concentration of adenosylhomocysteine. This chain is Adenosylhomocysteinase, found in Acidovorax ebreus (strain TPSY) (Diaphorobacter sp. (strain TPSY)).